A 740-amino-acid chain; its full sequence is N-acetylated-alpha-linked acidic dipeptidase 2 (740 aa).

At Met1–Leu7 the chain is on the cytoplasmic side. Residues Arg8–Ile31 form a helical; Signal-anchor for type II membrane protein membrane-spanning segment. Over Lys32–Leu740 the chain is Extracellular. N-linked (GlcNAc...) asparagine glycans are attached at residues Asn111, Asn143, and Asn185. 2 residues coordinate substrate: Arg200 and Asn247. Ca(2+)-binding residues include Thr259 and Tyr262. Residues Ala264 to Leu577 form an NAALADase region. The N-linked (GlcNAc...) asparagine glycan is linked to Asn314. Residues His367 and Asp377 each coordinate Zn(2+). Residue Glu414 coordinates substrate. Catalysis depends on Glu414, which acts as the Nucleophile; for NAALADase activity. A Zn(2+)-binding site is contributed by Glu415. Residues Glu423 and Glu426 each contribute to the Ca(2+) site. Asp443 lines the Zn(2+) pocket. N-linked (GlcNAc...) asparagine glycosylation occurs at Asn449. Substrate is bound by residues Ser507–Gly508, Arg524–Arg526, Tyr542, and Tyr542–His543. Residue His543 coordinates Zn(2+). Asn603 carries N-linked (GlcNAc...) asparagine glycosylation. The Charge relay system role is filled by Ser618. A glycan (N-linked (GlcNAc...) asparagine) is linked at Asn628. Active-site charge relay system residues include Asp656 and His679. Residue Lys689–Tyr690 participates in substrate binding.

The protein belongs to the peptidase M28 family. M28B subfamily. In terms of assembly, homodimer. Zn(2+) is required as a cofactor. As to expression, expressed ovary, testes and lung, but not brain.

The protein localises to the cell membrane. The enzyme catalyses Release of an unsubstituted, C-terminal glutamyl residue, typically from Ac-Asp-Glu or folylpoly-gamma-glutamates.. Functionally, has N-acetylated-alpha-linked-acidic dipeptidase (NAALADase) activity. Also exhibits a dipeptidyl-peptidase IV type activity. Inactivates the peptide neurotransmitter N-acetylaspartylglutamate. This Mus musculus (Mouse) protein is N-acetylated-alpha-linked acidic dipeptidase 2 (Naalad2).